The sequence spans 40 residues: Antimicrobial peptide 2 (40 aa).

In terms of domain architecture, Chitin-binding type-1 spans 1–40 (AQCGAQGGGATCPGGLCCSQWGWCGSTPKYCGAGCQSNCR). 4 cysteine pairs are disulfide-bonded: Cys3-Cys18, Cys12-Cys24, Cys17-Cys31, and Cys35-Cys39.

Post-translationally, not glycosylated.

Functionally, antimicrobial peptide active against plant pathogenic fungi and Gram-negative and -positive bacteria. In Fagopyrum esculentum (Common buckwheat), this protein is Antimicrobial peptide 2.